The primary structure comprises 523 residues: Putative pentatricopeptide repeat-containing protein At3g15200 (523 aa).

10 PPR repeats span residues 142-172 (SSML…MSKR), 177-211 (NEKT…GIDD), 212-242 (DLVA…RRRE), 246-280 (DIKA…KCRP), 281-315 (DVVS…RRNP), 316-350 (DVKI…GPDP), 351-385 (NVVT…GGSC), 388-418 (NDVT…NKCE), 420-454 (TSDL…GLGP), and 455-489 (DQRT…GMVP). The segment at 497 to 523 (LNQNKTKPRVEDKMLRSNLTSEESESD) is disordered.

Belongs to the PPR family. P subfamily.

This is Putative pentatricopeptide repeat-containing protein At3g15200 from Arabidopsis thaliana (Mouse-ear cress).